A 343-amino-acid polypeptide reads, in one-letter code: GDSL esterase/lipase EXL6 (343 aa).

An N-terminal signal peptide occupies residues 1 to 21; sequence MFRGKIFVLSLFSIYVLSSAA. N-linked (GlcNAc...) asparagine glycosylation occurs at asparagine 24. Residue serine 36 is the Nucleophile of the active site. Residues aspartate 318 and histidine 321 contribute to the active site.

It belongs to the 'GDSL' lipolytic enzyme family. As to expression, flower buds and pollen.

It is found in the secreted. The protein resides in the extracellular space. Its subcellular location is the extracellular matrix. It localises to the pollen coat. Functionally, required for the formation of pollen coats and male fertility. The polypeptide is GDSL esterase/lipase EXL6 (EXL6) (Arabidopsis thaliana (Mouse-ear cress)).